The primary structure comprises 382 residues: MTEFWLISAPGEKTCQQTWEKLMAATTKNNNLSTNAKFNIPDLKVGTLDVLVGLSDELAKLDAFVEGAVKKVAQYMADVLEDSRDKVQENLLANGVDLVTYITRFQWDMAKYPIKQSLKNISEIIAKGVTQIDNDLKARASAYNNLKGNLQNLERKNAGSLITRSLAEIVKKDDFVLDSEYLITLLVVVPKNNYTDWMKEYETLSEMVVPRSSNVLSEDQDSYLCNVTLFRKAVDDFRHKARENKFVVRDFQYNEEEMKADKEEMNRLSTDKKKQFGPLVRWLKVNFSEAFIAWIHVKALRVFVESVLRYGLPVNFQAMLLQPNKKTMKKLREVLNDLYKHLDSSAASIIDAPMDIPGLNLSQQEYYPYVYYKIDCNLLEFK.

Threonine 2 is modified (N-acetylthreonine).

It belongs to the V-ATPase C subunit family. In terms of assembly, V-ATPase is a heteromultimeric enzyme made up of two complexes: the ATP-hydrolytic V1 complex and the proton translocation V0 complex. The V1 complex consists of three catalytic AB heterodimers that form a heterohexamer, three peripheral stalks each consisting of EG heterodimers, one central rotor including subunits D and F, and the regulatory subunits C and H. The proton translocation complex V0 consists of the proton transport subunit a, a ring of proteolipid subunits c9c'', rotary subunit d, subunits e and f, and two accessory subunits.

Subunit of the V1 complex of vacuolar(H+)-ATPase (V-ATPase), a multisubunit enzyme composed of a peripheral complex (V1) that hydrolyzes ATP and a membrane integral complex (V0) that translocates protons. V-ATPase is responsible for acidifying and maintaining the pH of intracellular compartments and in some cell types, is targeted to the plasma membrane, where it is responsible for acidifying the extracellular environment. Subunit C is necessary for the assembly of the catalytic sector of the enzyme and is likely to have a specific function in its catalytic activity. This is V-type proton ATPase subunit C 1 (atp6v1c1) from Xenopus laevis (African clawed frog).